The chain runs to 75 residues: MATKPFFRRRKVCPFSGDNAPKIDYKDVRLLQRYISERGKIVPARITAVSAKKQRELAQAIKRARFLALLPYAVK.

This sequence belongs to the bacterial ribosomal protein bS18 family. Part of the 30S ribosomal subunit. Forms a tight heterodimer with protein bS6.

Binds as a heterodimer with protein bS6 to the central domain of the 16S rRNA, where it helps stabilize the platform of the 30S subunit. In Rhodobacter capsulatus (strain ATCC BAA-309 / NBRC 16581 / SB1003), this protein is Small ribosomal subunit protein bS18 (rbsR).